A 246-amino-acid polypeptide reads, in one-letter code: E3 ubiquitin-protein ligase LubX (246 aa).

U-box domains follow at residues 36-109 and 131-204; these read TTPT…QTNY and EIPD…RKRE.

Interacts with host CLK1. In terms of processing, ubiquitinated in the presence of host E1 ubiquitin-activating enzyme, E2 ubiquitin-conjugating enzyme (UBE2D1 or UBE2D3) and ubiquitin.

It is found in the secreted. It localises to the host cell. It catalyses the reaction S-ubiquitinyl-[E2 ubiquitin-conjugating enzyme]-L-cysteine + [acceptor protein]-L-lysine = [E2 ubiquitin-conjugating enzyme]-L-cysteine + N(6)-ubiquitinyl-[acceptor protein]-L-lysine.. Its function is as follows. Effector proteins function to alter host cell physiology and promote bacterial survival in host tissues. This protein is an E3 ubiquitin ligase that interferes with host's ubiquitination pathway. Acts in conjunction with host E2 ubiquitin-conjugating enzymes UBE2D1 (UBCH5A) or UBE2D3 (UBCH5C), and mediates polyubiquitination of host kinase CLK1. The chain is E3 ubiquitin-protein ligase LubX (lubX) from Legionella pneumophila subsp. pneumophila (strain Philadelphia 1 / ATCC 33152 / DSM 7513).